The following is a 505-amino-acid chain: tRNA (guanine(6)-N(2))-methyltransferase THUMP3 (505 aa).

A disordered region spans residues 145 to 182 (KAKRRKANQSAGKEKADCGQGDKADEKDGKKKHASSTS). Over residues 156 to 173 (GKEKADCGQGDKADEKDG) the composition is skewed to basic and acidic residues. Residues 171-287 (KDGKKKHASS…DNEVIVAIAL (117 aa)) form the THUMP domain.

It belongs to the methyltransferase superfamily. Part of the heterodimeric THUMPD3-TRM112 methyltransferase complex; this complex forms an active tRNA methyltransferase, where TRMT112 acts as an activator of the catalytic subunit THUMPD3. In terms of tissue distribution, ubiquitously expressed. Abundantly expressed in the testis, also expressed in the brain, heart, kidney, liver, lung, muscle and spleen.

It is found in the cytoplasm. It carries out the reaction guanosine(6) in tRNA + S-adenosyl-L-methionine = N(2)-methylguanosine(6) in tRNA + S-adenosyl-L-homocysteine + H(+). The enzyme catalyses guanosine(7) in tRNA + S-adenosyl-L-methionine = N(2)-methylguanosine(7) in tRNA + S-adenosyl-L-homocysteine + H(+). In terms of biological role, catalytic subunit of the THUMPD3-TRM112 methyltransferase complex, that specifically mediates the S-adenosyl-L-methionine-dependent N(2)-methylation of guanosine nucleotide at position 6 (m2G6) in tRNAs. This is one of the major tRNA (guanine-N(2))-methyltransferases. Also catalyzes the S-adenosyl-L-methionine-dependent N(2)-methylation of guanosine nucleotide at position 7 of tRNA(Trp). The protein is tRNA (guanine(6)-N(2))-methyltransferase THUMP3 of Mus musculus (Mouse).